A 681-amino-acid polypeptide reads, in one-letter code: MWLSACLCLVLSFLGGVNGTCPSQCSCEYHGRHDGSGSRLVLCNDLDMNEVPANFPVDTSKLRIEKTVVRRLPAEAFYYLVELQYLWLAYNSVASIETSSFYNLRQLHELRLDGNSLTAFPWVSLLDMPHLRTLDLHNNRIASVPNEAVRYLRNLTCLDLSSNRLTTLPPDFLDSWSHLAVTPSRSPDFPPRRIILGLQDNPWFCDCHISKVIELSKVTDHAVVLLDPLMVCSEPERFQGILFQRVELEKCLKPSVMMSATKITSALGSNVLLRCDAKGHPTPQLTWTRSDGSTVNYTVIQESPGEGIRWSIISLTSISHKDAGDYRCKAKNLAGISEAVVTVTVVGGVTTTLSPDSSERSPGEPPEQHPQPGLGGSTPPSKSWLSPGLTSAPSYPTPSAALYTSTWSPPPSSLPPIFSAASATTSVQTSISGRTARTSHQPPLLHPGGKSNAKIEKNGRKFPPLSASKKEELALLDQAAPMETNVTIKDLRVARETGVSVTLMWNSSSSTQESSVTVLYSKYGEKDLLLVNADDYGKNQATINGLEPGSQYVACVCPKGVGPREDLCITFSTNRVEGRGSQWSLLLVVTSTACVIVVPLICFLLYKVCKLQCTSDPFWEEDLSKETYIQFETLSPRSQSIGELWTRRHRDDGERLLLCSQSSVDSQMNLKSDGCRTEYYG.

Positions M1–G19 are cleaved as a signal peptide. Residue N18 is glycosylated (N-linked (GlcNAc...) asparagine). The Lumenal segment spans residues T20–S584. 5 LRR repeats span residues P56 to Y79, L80 to N103, L104 to M128, P129 to Y151, and L152 to S175. The region spanning P254–T344 is the Ig-like domain. C275 and C328 are oxidised to a cystine. N296 carries an N-linked (GlcNAc...) asparagine glycan. 2 disordered regions span residues T350–S391 and T425–P464. Positions T378–S391 are enriched in polar residues. N-linked (GlcNAc...) asparagine glycosylation is found at N485 and N506. A helical membrane pass occupies residues L585–L605. Over Y606 to G681 the chain is Cytoplasmic.

As to expression, detected in the outer plexiform layer (OPL) of the retina, where it localizes to rod and cone ON-bipolar cells (at protein level). Also detected in bipolar cell bodies in the inner retinal layer (INL) (at protein level).

It localises to the cell projection. Its subcellular location is the dendrite. The protein resides in the perikaryon. It is found in the endoplasmic reticulum membrane. Functionally, plays a role in the synapse formation and synaptic transmission between cone photoreceptor cells and retinal bipolar cells. Required for normal transmission of a light-evoked stimulus from the cone photoreceptor cells to the ON-bipolar cells and ON-ganglion cells in the inner retina. Required in retinal ON-bipolar cells for normal localization of the cation channel TRPM1 at dendrite tips. Seems to play a specific role in synaptic contacts made by ON-bipolar cells with cone photoreceptor pedicles. May also have a role in cone synapse formation. Might facilitate FGFR1 exit from the endoplasmic reticulum to the Golgi. Could be a regulator of the FGFRs. This is Leucine-rich repeat, immunoglobulin-like domain and transmembrane domain-containing protein 3 from Mus musculus (Mouse).